Reading from the N-terminus, the 349-residue chain is Divinyl chlorophyll a/b light-harvesting protein PcbA (349 aa).

6 helical membrane passes run 27-47 (FIAA…AFTL), 57-77 (VPMG…GIGF), 89-109 (VVAV…GGLM), 202-222 (VMGG…FHIA), 242-262 (AILS…AFWS), and 304-324 (LANV…WHAL).

This sequence belongs to the PsbB/PsbC family. IsiA/Pcb subfamily. In terms of assembly, the antenna complex consists of divinyl chlorophylls (a and b) and divinyl chlorophyll a/b binding proteins and binds more divinyl chlorophyll b than does the antenna complex from high-light-adapted Prochlorococcus. Divinyl chlorophyll a is required as a cofactor. Requires divinyl chlorophyll b as cofactor.

The protein resides in the cellular thylakoid membrane. The antenna complex functions as a light receptor, it captures and delivers excitation energy to photosystems II and I. The Prochlorales pcb genes are not related to higher plant LHCs. In Prochlorococcus marinus (strain NATL2A), this protein is Divinyl chlorophyll a/b light-harvesting protein PcbA (pcbA).